A 123-amino-acid chain; its full sequence is Large ribosomal subunit protein bL12 (123 aa).

The protein belongs to the bacterial ribosomal protein bL12 family. Homodimer. Part of the ribosomal stalk of the 50S ribosomal subunit. Forms a multimeric L10(L12)X complex, where L10 forms an elongated spine to which 2 to 4 L12 dimers bind in a sequential fashion. Binds GTP-bound translation factors.

Forms part of the ribosomal stalk which helps the ribosome interact with GTP-bound translation factors. Is thus essential for accurate translation. The sequence is that of Large ribosomal subunit protein bL12 from Parvibaculum lavamentivorans (strain DS-1 / DSM 13023 / NCIMB 13966).